Here is a 199-residue protein sequence, read N- to C-terminus: 7-methyl-GTP pyrophosphatase (199 aa).

Aspartate 73 acts as the Proton acceptor in catalysis.

This sequence belongs to the Maf family. YceF subfamily. It depends on a divalent metal cation as a cofactor.

It is found in the cytoplasm. It catalyses the reaction N(7)-methyl-GTP + H2O = N(7)-methyl-GMP + diphosphate + H(+). In terms of biological role, nucleoside triphosphate pyrophosphatase that hydrolyzes 7-methyl-GTP (m(7)GTP). May have a dual role in cell division arrest and in preventing the incorporation of modified nucleotides into cellular nucleic acids. This chain is 7-methyl-GTP pyrophosphatase, found in Bordetella bronchiseptica (strain ATCC BAA-588 / NCTC 13252 / RB50) (Alcaligenes bronchisepticus).